The sequence spans 1157 residues: uncharacterized protein (1157 aa).

Basic and acidic residues predominate over residues 1–10 (MDPHWKRHDS). Disordered regions lie at residues 1–35 (MDPH…QRFG), 159–233 (QTTP…SVEP), and 478–498 (KNQS…GKGP). 2 stretches are compositionally biased toward low complexity: residues 18–31 (SPSA…PSSA) and 181–197 (SAGT…NPNF). Positions 208–228 (QEWQQSPLESPLSMHSLQESL) are enriched in polar residues. The region spanning 501–574 (VWFKPSDKRI…KVEYKAILHD (74 aa)) is the CSD2 domain. The RNB domain occupies 608–921 (LRDKLTFMIG…ICVQRQLREA (314 aa)). A DIS3L2 C-terminal domain is found at 973–1030 (GLVKHKAFVLAVDQEYIDIVIYEFGLERRISLDLLPLSNCDFNEQKHELYLSWRTNAS). A disordered region spans residues 1084–1113 (YSKARGNDSTSKTAKSSSGNQDISGDGKLH). A compositionally biased stretch (polar residues) spans 1090 to 1106 (NDSTSKTAKSSSGNQDI).

It belongs to the RNR ribonuclease family.

It localises to the cytoplasm. This is an uncharacterized protein from Schizosaccharomyces pombe (strain 972 / ATCC 24843) (Fission yeast).